A 414-amino-acid polypeptide reads, in one-letter code: Argininosuccinate synthase (414 aa).

Residues 15-23 (AYSGGLDTS) and Ala42 each bind ATP. 2 residues coordinate L-citrulline: Tyr93 and Ser98. An ATP-binding site is contributed by Gly123. Thr125, Asn129, and Asp130 together coordinate L-aspartate. Residue Asn129 coordinates L-citrulline. L-citrulline-binding residues include Arg133, Ser182, Ser191, Glu267, and Tyr279.

The protein belongs to the argininosuccinate synthase family. Type 1 subfamily. As to quaternary structure, homotetramer.

It localises to the cytoplasm. It catalyses the reaction L-citrulline + L-aspartate + ATP = 2-(N(omega)-L-arginino)succinate + AMP + diphosphate + H(+). It participates in amino-acid biosynthesis; L-arginine biosynthesis; L-arginine from L-ornithine and carbamoyl phosphate: step 2/3. The sequence is that of Argininosuccinate synthase from Deinococcus geothermalis (strain DSM 11300 / CIP 105573 / AG-3a).